The sequence spans 95 residues: Secretoglobin family 1C member 1 (95 aa).

The first 23 residues, 1 to 23, serve as a signal peptide directing secretion; it reads MKGSSALLLVALSLLCVCGLTRA.

This sequence belongs to the secretoglobin family.

Its subcellular location is the secreted. This Mus musculus (Mouse) protein is Secretoglobin family 1C member 1 (Scgb1c1).